Here is a 504-residue protein sequence, read N- to C-terminus: Cytochrome P450 2D1 (504 aa).

Cys446 is a binding site for heme.

Belongs to the cytochrome P450 family. Heme is required as a cofactor.

Its subcellular location is the endoplasmic reticulum membrane. It localises to the microsome membrane. The catalysed reaction is an organic molecule + reduced [NADPH--hemoprotein reductase] + O2 = an alcohol + oxidized [NADPH--hemoprotein reductase] + H2O + H(+). In terms of biological role, cytochromes P450 are a group of heme-thiolate monooxygenases. In liver microsomes, this enzyme is involved in an NADPH-dependent electron transport pathway. It oxidizes a variety of structurally unrelated compounds, including steroids, fatty acids, and xenobiotics. The protein is Cytochrome P450 2D1 (Cyp2d1) of Rattus norvegicus (Rat).